Here is a 449-residue protein sequence, read N- to C-terminus: Exodeoxyribonuclease 7 large subunit (449 aa).

Belongs to the XseA family. As to quaternary structure, heterooligomer composed of large and small subunits.

Its subcellular location is the cytoplasm. The catalysed reaction is Exonucleolytic cleavage in either 5'- to 3'- or 3'- to 5'-direction to yield nucleoside 5'-phosphates.. In terms of biological role, bidirectionally degrades single-stranded DNA into large acid-insoluble oligonucleotides, which are then degraded further into small acid-soluble oligonucleotides. The polypeptide is Exodeoxyribonuclease 7 large subunit (Salmonella agona (strain SL483)).